A 460-amino-acid chain; its full sequence is Ammonium transporter Rh type B-B (460 aa).

Topologically, residues 1–10 (MTSYSTNMRI) are cytoplasmic. Residues 11-31 (KLPLFCLLLQFITIILFAVFV) form a helical membrane-spanning segment. Topologically, residues 32 to 62 (RYDHESDARGWHEELNNHSSSNADNDFYYRY) are extracellular. Asn48 carries an N-linked (GlcNAc...) asparagine glycan. The chain crosses the membrane as a helical span at residues 63–83 (PSFQDVHVMIFIGFGFLMTFL). At 84-87 (KRYG) the chain is on the cytoplasmic side. Residues 88–108 (FSSVAFNFLIAAFGLQWSTLI) form a helical membrane-spanning segment. At 109-125 (QGFFHGFHDGKIHVGIE) the chain is on the extracellular side. Residues 126–146 (SMINADFCTGAVLISFGAVLG) form a helical membrane-spanning segment. Over 147–150 (KTSP) the chain is Cytoplasmic. A helical transmembrane segment spans residues 151–171 (VQLIIMTLVEVTLFGINEYII). The Extracellular portion of the chain corresponds to 172-179 (LNIVGAKD). The helical transmembrane segment at 180-202 (AGGSMTIHTFGAYFGLIVSRVLY) threads the bilayer. The Cytoplasmic segment spans residues 203–220 (REDLEKSRQREGSVYHSD). A helical transmembrane segment spans residues 221–241 (LFAMIGTIYLWMFWPSFNSAV). The Extracellular segment spans residues 242–252 (TAHGDDQHRTV). The chain crosses the membrane as a helical span at residues 253–273 (MNTYYSLAACTLATFGFSALL). Residues 274 to 283 (NGEGKLDMVH) lie on the Cytoplasmic side of the membrane. Residues 284-304 (IQNAALAGGVAVGTSGEMMLT) traverse the membrane as a helical segment. Position 305 (Pro305) is a topological domain, extracellular. A helical transmembrane segment spans residues 306 to 326 (FGAMIAGTLAGMISVLGYKYL). At 327-347 (TPVLDSKLKIQDTCGVHNLHG) the chain is on the cytoplasmic side. The chain crosses the membrane as a helical span at residues 348-368 (MPGILGAIIGAIVALFATADI). The Extracellular portion of the chain corresponds to 369 to 394 (YGDGMGDVFPLISDGSRTAKQQSLYQ). Residues 395–415 (FLALLVALGFAIIGGTVVGFI) form a helical membrane-spanning segment. At 416 to 460 (LKLPIFGTPSDAECFEDAIYWEVPGGEGHQQLTVVINNEDPDTQA) the chain is on the cytoplasmic side.

This sequence belongs to the ammonium transporter (TC 2.A.49) family. Rh subfamily.

The protein resides in the basolateral cell membrane. Its subcellular location is the cytoplasmic vesicle membrane. In terms of biological role, functions as a specific ammonium transporter. The polypeptide is Ammonium transporter Rh type B-B (rhbg-b) (Xenopus laevis (African clawed frog)).